The following is a 754-amino-acid chain: ATP-dependent zinc metalloprotease FtsH (754 aa).

Over 1-9 the chain is Cytoplasmic; it reads MKQRMKKPS. Residues 10–30 traverse the membrane as a helical segment; the sequence is LGTFILILILIGILAYVLWQF. Over 31–186 the chain is Extracellular; sequence LSPKLGYKSL…FDRPRGNFLS (156 aa). The chain crosses the membrane as a helical span at residues 187–207; it reads SFIVPYIPFLLISLFGFWLFF. At 208 to 754 the chain is on the cytoplasmic side; it reads RLSQNSQAGG…ESKIDSSKEQ (547 aa). 277 to 284 contributes to the ATP binding site; that stretch reads GPPGTGKT. Histidine 499 is a Zn(2+) binding site. Residue glutamate 500 is part of the active site. Residues histidine 503 and aspartate 577 each coordinate Zn(2+). Residues 713 to 754 are disordered; sequence QEKSYENEDQNQNSLEAINYNIDDQDDDKNDSESKIDSSKEQ. The span at 743–754 shows a compositional bias: basic and acidic residues; sequence DSESKIDSSKEQ.

It in the central section; belongs to the AAA ATPase family. This sequence in the C-terminal section; belongs to the peptidase M41 family. Homohexamer. Zn(2+) is required as a cofactor.

It is found in the cell membrane. Acts as a processive, ATP-dependent zinc metallopeptidase for both cytoplasmic and membrane proteins. Plays a role in the quality control of integral membrane proteins. The protein is ATP-dependent zinc metalloprotease FtsH of Mesomycoplasma conjunctivae (strain ATCC 25834 / NCTC 10147 / HRC/581) (Mycoplasma conjunctivae).